The primary structure comprises 678 residues: Geranylgeranyl transferase type-2 subunit alpha 1 (678 aa).

PFTA repeat units follow at residues 40 to 74, 86 to 120, 121 to 155, 156 to 190, and 201 to 235; these read YTNE…DRLA, ILDE…KGHS, SVGN…LTNR, SEQD…SLLA, and KIPE…QTLN. LRR repeat units lie at residues 510-532, 533-554, 555-578, 580-604, and 638-663; these read MNNL…VEKL, LFVQ…LEAM, QLLS…SLRH, KQLK…RYLC, and DLNL…VLQV.

The protein belongs to the protein prenyltransferase subunit alpha family. In terms of assembly, heterotrimer composed of the alpha subunit RGTA, the beta subunit RGTB and REP; within this trimer, RGTA and RGTB form the catalytic component, while REP mediates peptide substrate binding.

It carries out the reaction geranylgeranyl diphosphate + L-cysteinyl-[protein] = S-geranylgeranyl-L-cysteinyl-[protein] + diphosphate. Its activity is regulated as follows. The enzymatic reaction requires the aid of the Rab escort protein REP. Its function is as follows. Catalyzes the transfer of a geranylgeranyl moiety from geranylgeranyl diphosphate to both cysteines of Rab proteins with the C-terminal sequence -CCXX, CXXX, -XCCX and -XCXC, such as RABA1A, RABA2A, RABF2A and RABG2. In vitro, can prenylate PGGTI targets with the C-terminal Cys-aliphatic-aliphatic-X (CaaX) with leucine in the terminal position. Substrates with the C-terminal sequence -CSIL such as ARAC11/ROP1 or GG2/AGG2 are prenylated independently of REP and when the alpha subunit is associated with a beta subunit (RGTB1 or RGTB2). The chain is Geranylgeranyl transferase type-2 subunit alpha 1 from Arabidopsis thaliana (Mouse-ear cress).